Here is a 175-residue protein sequence, read N- to C-terminus: MGTVNVVRVASRHKLSWYEKFYFYSIGKGLWITLKHFIKAAILRKAVTIEFPEKKRKYSTRFRGMHTMKRDEQGRERCTSCFCCMWICPADAIYIEAAEVTPEIQHLHPEDKYAKKFEIDLLRCIFCGMCEEACPKGAIYLDGPGEMATDNREDLILTKERMMQLVGGPIIGERQ.

2 4Fe-4S ferredoxin-type domains span residues Lys-69–Ala-98 and Lys-115–Pro-144. Residues Cys-78, Cys-81, Cys-84, Cys-88, Cys-124, Cys-127, Cys-130, and Cys-134 each contribute to the [4Fe-4S] cluster site.

It belongs to the complex I 23 kDa subunit family. NDH-1 is composed of 14 different subunits. Subunits NuoA, H, J, K, L, M, N constitute the membrane sector of the complex. The cofactor is [4Fe-4S] cluster.

The protein resides in the cell inner membrane. The enzyme catalyses a quinone + NADH + 5 H(+)(in) = a quinol + NAD(+) + 4 H(+)(out). In terms of biological role, NDH-1 shuttles electrons from NADH, via FMN and iron-sulfur (Fe-S) centers, to quinones in the respiratory chain. The immediate electron acceptor for the enzyme in this species is believed to be ubiquinone. Couples the redox reaction to proton translocation (for every two electrons transferred, four hydrogen ions are translocated across the cytoplasmic membrane), and thus conserves the redox energy in a proton gradient. The polypeptide is NADH-quinone oxidoreductase subunit I (Leptospira interrogans serogroup Icterohaemorrhagiae serovar Lai (strain 56601)).